The following is a 98-amino-acid chain: NADH-ubiquinone oxidoreductase chain 4L (98 aa).

Helical transmembrane passes span 1–21 (MEQI…GVLT), 28–48 (STLL…VLLI), and 61–81 (LILL…LVTI).

It belongs to the complex I subunit 4L family. Core subunit of respiratory chain NADH dehydrogenase (Complex I) which is composed of 45 different subunits.

The protein localises to the mitochondrion inner membrane. The catalysed reaction is a ubiquinone + NADH + 5 H(+)(in) = a ubiquinol + NAD(+) + 4 H(+)(out). Its function is as follows. Core subunit of the mitochondrial membrane respiratory chain NADH dehydrogenase (Complex I) which catalyzes electron transfer from NADH through the respiratory chain, using ubiquinone as an electron acceptor. Part of the enzyme membrane arm which is embedded in the lipid bilayer and involved in proton translocation. This is NADH-ubiquinone oxidoreductase chain 4L (MT-ND4L) from Monodelphis domestica (Gray short-tailed opossum).